The sequence spans 975 residues: Probable ATP-dependent RNA helicase CG8611 (975 aa).

Residues 1-24 are compositionally biased toward polar residues; sequence MVENISLNVTVKSSARKNQQQSPA. Disordered stretches follow at residues 1–38, 50–104, and 127–295; these read MVENISLNVTVKSSARKNQQQSPALSVKKRAQKSQDFD, AIVV…DDLM, and TTKP…FRTK. Over residues 64-94 the composition is skewed to low complexity; it reads PTNSSVPNTTKSPTPSVSSSKSAISTLSASP. Phosphoserine occurs at positions 75 and 99. A compositionally biased stretch (basic and acidic residues) spans 190 to 203; sequence QLEEERRQKRREEG. Phosphoserine is present on residues S210, S220, and S224. Over residues 242-261 the composition is skewed to acidic residues; the sequence is IEDSGESGEESATSDEEPDE. Basic and acidic residues predominate over residues 269–285; the sequence is QEKEPKQTAKKPPKAEE. The Q motif motif lies at 327–356; the sequence is SKISTLGLHPHAVKNLEDLLSIRELTSVQQ. The Helicase ATP-binding domain maps to 359 to 548; that stretch reads IPEVLQGKDV…GLTLKNPLYI (190 aa). ATP is bound at residue 372–379; sequence SQTGSGKT. The DEAD box signature appears at 485 to 488; it reads DEAD. The region spanning 616–789 is the Helicase C-terminal domain; the sequence is LLAKEVDASP…DMYAYLQTLL (174 aa). S667 is subject to Phosphoserine. Disordered stretches follow at residues 915–942 and 955–975; these read LQQRDVGAQKPGAPPPKGGFIGGGVGRS and NMSEFDSGLPPEGAAKRRKQA.

The protein belongs to the DEAD box helicase family. DDX31/DBP7 subfamily.

It catalyses the reaction ATP + H2O = ADP + phosphate + H(+). Functionally, probable ATP-dependent RNA helicase. The protein is Probable ATP-dependent RNA helicase CG8611 of Drosophila melanogaster (Fruit fly).